Consider the following 469-residue polypeptide: Adenosylhomocysteinase (469 aa).

Substrate contacts are provided by Thr63, Asp139, and Glu164. Residue 165-167 (TTT) coordinates NAD(+). Substrate-binding residues include Lys194 and Asp198. NAD(+) is bound by residues Asn199, 228–233 (GYGDVG), Glu251, Asn300, 321–323 (IGH), and Asn375.

This sequence belongs to the adenosylhomocysteinase family. The cofactor is NAD(+).

Its subcellular location is the cytoplasm. It carries out the reaction S-adenosyl-L-homocysteine + H2O = L-homocysteine + adenosine. It functions in the pathway amino-acid biosynthesis; L-homocysteine biosynthesis; L-homocysteine from S-adenosyl-L-homocysteine: step 1/1. May play a key role in the regulation of the intracellular concentration of adenosylhomocysteine. This chain is Adenosylhomocysteinase, found in Pseudomonas fluorescens (strain ATCC BAA-477 / NRRL B-23932 / Pf-5).